We begin with the raw amino-acid sequence, 298 residues long: 1D-myo-inositol 2-acetamido-2-deoxy-alpha-D-glucopyranoside deacetylase (298 aa).

3 residues coordinate Zn(2+): His-14, Asp-17, and His-148. The interval 277–298 is disordered; it reads RGPAGPDGREHDLFAGLDGPAT.

The protein belongs to the MshB deacetylase family. The cofactor is Zn(2+).

The enzyme catalyses 1D-myo-inositol 2-acetamido-2-deoxy-alpha-D-glucopyranoside + H2O = 1D-myo-inositol 2-amino-2-deoxy-alpha-D-glucopyranoside + acetate. Catalyzes the deacetylation of 1D-myo-inositol 2-acetamido-2-deoxy-alpha-D-glucopyranoside (GlcNAc-Ins) in the mycothiol biosynthesis pathway. The protein is 1D-myo-inositol 2-acetamido-2-deoxy-alpha-D-glucopyranoside deacetylase of Nocardia farcinica (strain IFM 10152).